A 78-amino-acid chain; its full sequence is MKAVVDAAGRIVVPKPLREALGLQPGSTVEISRYGAGLHLIPTGRTARLEEENGVLVATGETTIDDEVVFGLIDSGRK.

One can recognise a SpoVT-AbrB domain in the interval 1-45; it reads MKAVVDAAGRIVVPKPLREALGLQPGSTVEISRYGAGLHLIPTGR.

The protein belongs to the VapB family. As to quaternary structure, interacts with cognate toxin VapC27 and non-cognate toxins MazF6 and VapC40. Interaction with MazF6 and MazF9 partially neutralizes the toxins.

Functionally, antitoxin component of a type II toxin-antitoxin (TA) system. Cognate toxin is VapC27. Upon expression in E.coli partially counteracts the ribonuclease activity of non-cognate toxins MazF6 and MazF9. In Mycobacterium tuberculosis (strain ATCC 25618 / H37Rv), this protein is Antitoxin VapB27 (vapB27).